The primary structure comprises 486 residues: Aspartyl/glutamyl-tRNA(Asn/Gln) amidotransferase subunit B (486 aa).

It belongs to the GatB/GatE family. GatB subfamily. Heterotrimer of A, B and C subunits.

It carries out the reaction L-glutamyl-tRNA(Gln) + L-glutamine + ATP + H2O = L-glutaminyl-tRNA(Gln) + L-glutamate + ADP + phosphate + H(+). The catalysed reaction is L-aspartyl-tRNA(Asn) + L-glutamine + ATP + H2O = L-asparaginyl-tRNA(Asn) + L-glutamate + ADP + phosphate + 2 H(+). Its function is as follows. Allows the formation of correctly charged Asn-tRNA(Asn) or Gln-tRNA(Gln) through the transamidation of misacylated Asp-tRNA(Asn) or Glu-tRNA(Gln) in organisms which lack either or both of asparaginyl-tRNA or glutaminyl-tRNA synthetases. The reaction takes place in the presence of glutamine and ATP through an activated phospho-Asp-tRNA(Asn) or phospho-Glu-tRNA(Gln). The chain is Aspartyl/glutamyl-tRNA(Asn/Gln) amidotransferase subunit B from Orientia tsutsugamushi (strain Ikeda) (Rickettsia tsutsugamushi).